Consider the following 515-residue polypeptide: Galactose/methyl galactoside import ATP-binding protein MglA (515 aa).

ABC transporter domains are found at residues 8–243 and 254–499; these read LEMR…VGRE and IPKE…AKYL. 40–47 serves as a coordination point for ATP; the sequence is GENGAGKS.

It belongs to the ABC transporter superfamily. Galactose/methyl galactoside importer (TC 3.A.1.2.3) family. In terms of assembly, the complex is composed of one ATP-binding protein (MglA), two transmembrane proteins (MglC) and a solute-binding protein (MglB).

The protein localises to the cell membrane. It catalyses the reaction D-galactose(out) + ATP + H2O = D-galactose(in) + ADP + phosphate + H(+). The enzyme catalyses methyl beta-D-galactoside(out) + ATP + H2O = methyl beta-D-galactoside(in) + ADP + phosphate + H(+). Part of the ABC transporter complex MglABC involved in galactose/methyl galactoside import. Responsible for energy coupling to the transport system. In Clostridium perfringens (strain 13 / Type A), this protein is Galactose/methyl galactoside import ATP-binding protein MglA.